Here is a 310-residue protein sequence, read N- to C-terminus: Cytosolic Fe-S cluster assembly factor Nubp1 homolog (310 aa).

Residues cysteine 8, cysteine 22, cysteine 25, and cysteine 31 each contribute to the [4Fe-4S] cluster site. Residue 62-69 (GKGGVGKS) participates in ATP binding. Residues cysteine 239 and cysteine 242 each contribute to the [4Fe-4S] cluster site.

This sequence belongs to the Mrp/NBP35 ATP-binding proteins family. NUBP1/NBP35 subfamily. As to quaternary structure, heterotetramer of 2 Nubp1 and 2 Nubp2 chains. It depends on [4Fe-4S] cluster as a cofactor.

It is found in the cytoplasm. In terms of biological role, component of the cytosolic iron-sulfur (Fe/S) protein assembly (CIA) machinery. Required for maturation of extramitochondrial Fe-S proteins. The Nubp1-Nubp2 heterotetramer forms a Fe-S scaffold complex, mediating the de novo assembly of an Fe-S cluster and its transfer to target apoproteins. The chain is Cytosolic Fe-S cluster assembly factor Nubp1 homolog from Drosophila willistoni (Fruit fly).